Consider the following 396-residue polypeptide: NADH-quinone oxidoreductase subunit D (396 aa).

Belongs to the complex I 49 kDa subunit family. NDH-1 is composed of 14 different subunits. Subunits NuoB, C, D, E, F, and G constitute the peripheral sector of the complex.

The protein resides in the cell inner membrane. The catalysed reaction is a quinone + NADH + 5 H(+)(in) = a quinol + NAD(+) + 4 H(+)(out). Functionally, NDH-1 shuttles electrons from NADH, via FMN and iron-sulfur (Fe-S) centers, to quinones in the respiratory chain. The immediate electron acceptor for the enzyme in this species is believed to be ubiquinone. Couples the redox reaction to proton translocation (for every two electrons transferred, four hydrogen ions are translocated across the cytoplasmic membrane), and thus conserves the redox energy in a proton gradient. This is NADH-quinone oxidoreductase subunit D from Bartonella henselae (strain ATCC 49882 / DSM 28221 / CCUG 30454 / Houston 1) (Rochalimaea henselae).